A 274-amino-acid chain; its full sequence is Penicillin-insensitive murein endopeptidase (274 aa).

The first 19 residues, 1–19 (MKNTVIALLALLASAGSLA), serve as a signal peptide directing secretion. 3 disulfides stabilise this stretch: Cys44–Cys265, Cys187–Cys235, and Cys216–Cys223. Residues His110, His113, Asp120, Asp147, His150, and His211 each contribute to the Zn(2+) site. The interval 224 to 263 (EDQAPPPPGDGCGAELQSWFEPPKPGSTPPVKKTPPPLPP) is disordered. Residues 245-263 (PPKPGSTPPVKKTPPPLPP) are compositionally biased toward pro residues.

The protein belongs to the peptidase M74 family. In terms of assembly, dimer. The cofactor is Zn(2+).

It is found in the periplasm. Its function is as follows. Murein endopeptidase that cleaves the D-alanyl-meso-2,6-diamino-pimelyl amide bond that connects peptidoglycan strands. Likely plays a role in the removal of murein from the sacculus. This is Penicillin-insensitive murein endopeptidase from Klebsiella pneumoniae (strain 342).